Consider the following 196-residue polypeptide: Putative NADH dehydrogenase/NAD(P)H nitroreductase Smlt0482 (196 aa).

Belongs to the nitroreductase family. HadB/RutE subfamily. FMN serves as cofactor.

The sequence is that of Putative NADH dehydrogenase/NAD(P)H nitroreductase Smlt0482 from Stenotrophomonas maltophilia (strain K279a).